A 377-amino-acid chain; its full sequence is Nitric oxide reductase FlRd-NAD(+) reductase (377 aa).

The protein belongs to the FAD-dependent oxidoreductase family. FAD serves as cofactor.

It localises to the cytoplasm. It carries out the reaction 2 reduced [nitric oxide reductase rubredoxin domain] + NAD(+) + H(+) = 2 oxidized [nitric oxide reductase rubredoxin domain] + NADH. It functions in the pathway nitrogen metabolism; nitric oxide reduction. In terms of biological role, one of at least two accessory proteins for anaerobic nitric oxide (NO) reductase. Reduces the rubredoxin moiety of NO reductase. The polypeptide is Nitric oxide reductase FlRd-NAD(+) reductase (Escherichia coli O157:H7).